The sequence spans 500 residues: Glutamate--tRNA ligase (500 aa).

The short motif at 12 to 22 is the 'HIGH' region element; the sequence is PSPTGHLHIGN. Residues 259-263 carry the 'KMSKS' region motif; the sequence is KLSKR. Lysine 262 lines the ATP pocket.

It belongs to the class-I aminoacyl-tRNA synthetase family. Glutamate--tRNA ligase type 1 subfamily. As to quaternary structure, monomer.

The protein localises to the cytoplasm. It catalyses the reaction tRNA(Glu) + L-glutamate + ATP = L-glutamyl-tRNA(Glu) + AMP + diphosphate. In terms of biological role, catalyzes the attachment of glutamate to tRNA(Glu) in a two-step reaction: glutamate is first activated by ATP to form Glu-AMP and then transferred to the acceptor end of tRNA(Glu). This chain is Glutamate--tRNA ligase, found in Lactobacillus delbrueckii subsp. bulgaricus.